The sequence spans 751 residues: Catalase-peroxidase (751 aa).

Positions 1–21 (MSNESKCPFHQTAGGGTTNRD) are disordered. The tryptophyl-tyrosyl-methioninium (Trp-Tyr) (with M-270) cross-link spans 90-244 (WHSAGTYRIG…LAAVQMGLIY (155 aa)). Catalysis depends on H91, which acts as the Proton acceptor. Positions 244-270 (YVNPEGPEGNPDPVASGKDIRETFGRM) form a cross-link, tryptophyl-tyrosyl-methioninium (Tyr-Met) (with W-90). H285 is a binding site for heme b. The segment at 365 to 390 (AHQWRPKEGKGAGTVPDAHDPGKKHA) is disordered.

The protein belongs to the peroxidase family. Peroxidase/catalase subfamily. In terms of assembly, homodimer or homotetramer. The cofactor is heme b. Post-translationally, formation of the three residue Trp-Tyr-Met cross-link is important for the catalase, but not the peroxidase activity of the enzyme.

The catalysed reaction is H2O2 + AH2 = A + 2 H2O. The enzyme catalyses 2 H2O2 = O2 + 2 H2O. In terms of biological role, bifunctional enzyme with both catalase and broad-spectrum peroxidase activity. This is Catalase-peroxidase from Pseudomonas putida (strain GB-1).